The sequence spans 540 residues: ADP,ATP carrier protein 2 (540 aa).

Transmembrane regions (helical) follow at residues 24-44, 62-82, 94-114, 151-171, 223-243, 295-315, 337-357, 367-387, 391-411, 458-478, and 480-500; these read FSKF…YCLL, VIPF…TMVY, VFYC…VIIY, IYYV…FWGL, SVML…IWLY, LLGL…FEVV, ITTL…GQCI, LVTP…IFAA, ISIF…WTGG, SGGS…AASL, and VIAL…AYIG.

Belongs to the ADP/ATP translocase tlc family.

Its subcellular location is the cell membrane. The polypeptide is ADP,ATP carrier protein 2 (tlcB) (Chlamydia pneumoniae (Chlamydophila pneumoniae)).